A 1368-amino-acid polypeptide reads, in one-letter code: DNA-directed RNA polymerase subunit beta (1368 aa).

Belongs to the RNA polymerase beta chain family. In terms of assembly, the RNAP catalytic core consists of 2 alpha, 1 beta, 1 beta' and 1 omega subunit. When a sigma factor is associated with the core the holoenzyme is formed, which can initiate transcription.

It catalyses the reaction RNA(n) + a ribonucleoside 5'-triphosphate = RNA(n+1) + diphosphate. Functionally, DNA-dependent RNA polymerase catalyzes the transcription of DNA into RNA using the four ribonucleoside triphosphates as substrates. This Legionella pneumophila (strain Corby) protein is DNA-directed RNA polymerase subunit beta.